A 348-amino-acid polypeptide reads, in one-letter code: Probable dual-specificity RNA methyltransferase RlmN (348 aa).

The active-site Proton acceptor is Glu-89. Positions Glu-95–Glu-330 constitute a Radical SAM core domain. Cys-102 and Cys-335 are disulfide-bonded. [4Fe-4S] cluster is bound by residues Cys-109, Cys-113, and Cys-116. S-adenosyl-L-methionine contacts are provided by residues Gly-157 to Glu-158, Ser-189, Ser-214 to Asn-216, and Asn-292. The active-site S-methylcysteine intermediate is the Cys-335.

The protein belongs to the radical SAM superfamily. RlmN family. It depends on [4Fe-4S] cluster as a cofactor.

It localises to the cytoplasm. The enzyme catalyses adenosine(2503) in 23S rRNA + 2 reduced [2Fe-2S]-[ferredoxin] + 2 S-adenosyl-L-methionine = 2-methyladenosine(2503) in 23S rRNA + 5'-deoxyadenosine + L-methionine + 2 oxidized [2Fe-2S]-[ferredoxin] + S-adenosyl-L-homocysteine. It catalyses the reaction adenosine(37) in tRNA + 2 reduced [2Fe-2S]-[ferredoxin] + 2 S-adenosyl-L-methionine = 2-methyladenosine(37) in tRNA + 5'-deoxyadenosine + L-methionine + 2 oxidized [2Fe-2S]-[ferredoxin] + S-adenosyl-L-homocysteine. Specifically methylates position 2 of adenine 2503 in 23S rRNA and position 2 of adenine 37 in tRNAs. This Aquifex aeolicus (strain VF5) protein is Probable dual-specificity RNA methyltransferase RlmN.